The sequence spans 197 residues: Probable nicotinate-nucleotide adenylyltransferase (197 aa).

It belongs to the NadD family.

The catalysed reaction is nicotinate beta-D-ribonucleotide + ATP + H(+) = deamido-NAD(+) + diphosphate. The protein operates within cofactor biosynthesis; NAD(+) biosynthesis; deamido-NAD(+) from nicotinate D-ribonucleotide: step 1/1. Its function is as follows. Catalyzes the reversible adenylation of nicotinate mononucleotide (NaMN) to nicotinic acid adenine dinucleotide (NaAD). This Bordetella parapertussis (strain 12822 / ATCC BAA-587 / NCTC 13253) protein is Probable nicotinate-nucleotide adenylyltransferase.